The sequence spans 154 residues: Myoglobin (154 aa).

Positions 2-148 (GLSDGEWELV…FRNDIAAKYK (147 aa)) constitute a Globin domain. Residue Ser-4 is modified to Phosphoserine. Phosphothreonine is present on Thr-68. His-94 provides a ligand contact to heme b.

It belongs to the globin family. As to quaternary structure, monomeric.

The protein resides in the cytoplasm. It is found in the sarcoplasm. It catalyses the reaction Fe(III)-heme b-[protein] + nitric oxide + H2O = Fe(II)-heme b-[protein] + nitrite + 2 H(+). It carries out the reaction H2O2 + AH2 = A + 2 H2O. Functionally, monomeric heme protein which primary function is to store oxygen and facilitate its diffusion within muscle tissues. Reversibly binds oxygen through a pentacoordinated heme iron and enables its timely and efficient release as needed during periods of heightened demand. Depending on the oxidative conditions of tissues and cells, and in addition to its ability to bind oxygen, it also has a nitrite reductase activity whereby it regulates the production of bioactive nitric oxide. Under stress conditions, like hypoxia and anoxia, it also protects cells against reactive oxygen species thanks to its pseudoperoxidase activity. The chain is Myoglobin (MB) from Elephas maximus (Indian elephant).